We begin with the raw amino-acid sequence, 490 residues long: Glutathione reductase (490 aa).

Residues Ser-19 and Gly-20 each coordinate FAD. Ser-19 is a binding site for glutathione. Position 26 (Arg-26) interacts with glutathione. The FAD site is built by Glu-39, Thr-48, Cys-49, and Lys-57. Residues Cys-49 and Cys-54 are joined by a disulfide bond. Glutathione is bound at residue Tyr-110. Ala-126 contributes to the FAD binding site. NADP(+)-binding residues include Ala-208, Ile-211, Glu-214, Arg-231, and Arg-237. Ser-246 serves as a coordination point for glutathione. Gly-297 contacts NADP(+). An FAD-binding site is contributed by Asp-337. Residue Glu-343 participates in NADP(+) binding. Thr-345 lines the FAD pocket. Residue Arg-353 coordinates glutathione. Val-379 serves as a coordination point for NADP(+). A glutathione-binding site is contributed by Lys-432. Position 479 (His-479) interacts with FAD. The active-site Proton acceptor is His-479.

This sequence belongs to the class-I pyridine nucleotide-disulfide oxidoreductase family. In terms of assembly, homodimer. It depends on FAD as a cofactor.

It localises to the cytoplasm. Its subcellular location is the mitochondrion. The enzyme catalyses 2 glutathione + NADP(+) = glutathione disulfide + NADPH + H(+). Functionally, catalyzes the reduction of glutathione disulfide (GSSG) to reduced glutathione (GSH). Constitutes the major mechanism to maintain a high GSH:GSSG ratio in the cytosol. In Debaryomyces hansenii (strain ATCC 36239 / CBS 767 / BCRC 21394 / JCM 1990 / NBRC 0083 / IGC 2968) (Yeast), this protein is Glutathione reductase (GLR1).